Consider the following 457-residue polypeptide: Trigger factor (457 aa).

One can recognise a PPIase FKBP-type domain in the interval 162–243 (GDFVSIDLSA…VQTVKERELP (82 aa)). Residues 434–457 (AELFGSSEDETEADASDSAESEDK) form a disordered region. Positions 440 to 457 (SEDETEADASDSAESEDK) are enriched in acidic residues.

It belongs to the FKBP-type PPIase family. Tig subfamily.

It localises to the cytoplasm. It catalyses the reaction [protein]-peptidylproline (omega=180) = [protein]-peptidylproline (omega=0). In terms of biological role, involved in protein export. Acts as a chaperone by maintaining the newly synthesized protein in an open conformation. Functions as a peptidyl-prolyl cis-trans isomerase. This Rhodococcus erythropolis (strain PR4 / NBRC 100887) protein is Trigger factor.